The chain runs to 548 residues: Spindle pole body-associated protein cut12 (548 aa).

The interaction with plo1 stretch occupies residues Phe122–Glu325. Positions Lys123–Pro182 are disordered. Residues Leu126–Asp139 are compositionally biased toward polar residues. Basic and acidic residues-rich tracts occupy residues Asn140–Asn151 and Tyr161–Pro182. A coiled-coil region spans residues Lys261 to His312. The span at Pro344–Ser356 shows a compositional bias: polar residues. Disordered stretches follow at residues Pro344–Asn369 and Ser510–Ser548. Residues Arg522–Ser548 adopt a coiled-coil conformation.

As to quaternary structure, self-associates. Interacts with plo1.

Its subcellular location is the cytoplasm. The protein resides in the cytoskeleton. The protein localises to the microtubule organizing center. It localises to the spindle pole body. Its function is as follows. Required for bipolar spindle formation. May act as a regulator of the p34cdc2/cyclin B kinase. Required for full activation of the plo1 kinase. However, in cut12.1 cells at restrictive temperature the H1 kinase does rise concomitant with entry into mitosis, indicating that cut12 is not required for activation of p34cdc2/cyclin B. The cut12.s11 allele may promote cdc2-independent phosphorylation of SPB proteins thereby overcoming the requirement for cdc25 in cell cycle progression. The polypeptide is Spindle pole body-associated protein cut12 (cut12) (Schizosaccharomyces pombe (strain 972 / ATCC 24843) (Fission yeast)).